The primary structure comprises 359 residues: Mannonate dehydratase (359 aa).

Belongs to the mannonate dehydratase family. It depends on Fe(2+) as a cofactor. The cofactor is Mn(2+).

It catalyses the reaction D-mannonate = 2-dehydro-3-deoxy-D-gluconate + H2O. It participates in carbohydrate metabolism; pentose and glucuronate interconversion. Its function is as follows. Catalyzes the dehydration of D-mannonate. This Bacillus subtilis (strain 168) protein is Mannonate dehydratase (uxuA).